Here is a 418-residue protein sequence, read N- to C-terminus: Gamma-glutamyl phosphate reductase (418 aa).

This sequence belongs to the gamma-glutamyl phosphate reductase family.

It is found in the cytoplasm. It catalyses the reaction L-glutamate 5-semialdehyde + phosphate + NADP(+) = L-glutamyl 5-phosphate + NADPH + H(+). It functions in the pathway amino-acid biosynthesis; L-proline biosynthesis; L-glutamate 5-semialdehyde from L-glutamate: step 2/2. Functionally, catalyzes the NADPH-dependent reduction of L-glutamate 5-phosphate into L-glutamate 5-semialdehyde and phosphate. The product spontaneously undergoes cyclization to form 1-pyrroline-5-carboxylate. This chain is Gamma-glutamyl phosphate reductase, found in Geotalea uraniireducens (strain Rf4) (Geobacter uraniireducens).